The primary structure comprises 330 residues: Beta-ketoacyl-[acyl-carrier-protein] synthase III (330 aa).

Catalysis depends on residues Cys114 and His257. Residues 258 to 262 form an ACP-binding region; that stretch reads QANLR. Asn287 is a catalytic residue.

This sequence belongs to the thiolase-like superfamily. FabH family. In terms of assembly, homodimer.

The protein localises to the cytoplasm. It catalyses the reaction malonyl-[ACP] + acetyl-CoA + H(+) = 3-oxobutanoyl-[ACP] + CO2 + CoA. It functions in the pathway lipid metabolism; fatty acid biosynthesis. Its function is as follows. Catalyzes the condensation reaction of fatty acid synthesis by the addition to an acyl acceptor of two carbons from malonyl-ACP. Catalyzes the first condensation reaction which initiates fatty acid synthesis and may therefore play a role in governing the total rate of fatty acid production. Possesses both acetoacetyl-ACP synthase and acetyl transacylase activities. Its substrate specificity determines the biosynthesis of branched-chain and/or straight-chain of fatty acids. The polypeptide is Beta-ketoacyl-[acyl-carrier-protein] synthase III (Nitratidesulfovibrio vulgaris (strain ATCC 29579 / DSM 644 / CCUG 34227 / NCIMB 8303 / VKM B-1760 / Hildenborough) (Desulfovibrio vulgaris)).